Consider the following 180-residue polypeptide: MYPAKPTVATASEPVTGMAAPPVTGIPISSPGPAVAASQWSSGLCACFDDCGLCCMTCWCPCVTFGRIAEVVDRGATSCAAAGAIYTLLACFTGFQCHWIYSCTYRSKMRAQLGLPDVGCCDCCVHFCCEPCALCQQYRELRARGLDPALGWDVNAQKAANNNAGAGMTMYPPTAQGMGR.

A helical transmembrane segment spans residues 80–102 (AAAGAIYTLLACFTGFQCHWIYS).

It belongs to the cornifelin family. Expressed in roots, leaves, immature ears and silks. Detected preferentially in silks.

Its subcellular location is the membrane. This is Cell number regulator 7 (CNR7) from Zea mays (Maize).